Consider the following 674-residue polypeptide: F420-dependent formate dehydrogenase 1 subunit alpha (674 aa).

Residues 3–59 (LDFIHTICPYCGTGCGVDLVVKDGTLVGTNPFKRHPVNEGKTCIKGSYCHEFVHRDD) enclose the 4Fe-4S Mo/W bis-MGD-type domain. The [4Fe-4S] cluster site is built by Cys-10, Cys-13, Cys-17, and Cys-45. Position 132 (Sec-132) is a non-standard amino acid, selenocysteine.

It belongs to the prokaryotic molybdopterin-containing oxidoreductase family. As to quaternary structure, dimer of an alpha (FdhA1) and a beta (FdhB1) subunit. [4Fe-4S] cluster is required as a cofactor. Requires Mo-bis(molybdopterin guanine dinucleotide) as cofactor. The cofactor is Zn(2+).

It catalyses the reaction oxidized coenzyme F420-(gamma-L-Glu)(n) + formate + 2 H(+) = reduced coenzyme F420-(gamma-L-Glu)(n) + CO2. In terms of biological role, catalyzes the oxidation of formate to carbon dioxide, with coenzyme F420 as the electron acceptor. In vitro can also use methyl viologen as electron acceptor. The protein is F420-dependent formate dehydrogenase 1 subunit alpha of Methanococcus maripaludis (strain DSM 14266 / JCM 13030 / NBRC 101832 / S2 / LL).